A 225-amino-acid polypeptide reads, in one-letter code: Thylakoid lumenal 17.9 kDa protein, chloroplastic (225 aa).

It localises to the plastid. Its subcellular location is the chloroplast thylakoid lumen. The protein is Thylakoid lumenal 17.9 kDa protein, chloroplastic of Arabidopsis thaliana (Mouse-ear cress).